The sequence spans 421 residues: Protein ECERIFERUM 2 (421 aa).

Methionine 1 carries the post-translational modification N-acetylmethionine.

This sequence belongs to the plant acyltransferase family. Expressed at high levels in the epidermis of stems and young siliques. Expressed in flowers.

Its subcellular location is the endoplasmic reticulum. It is found in the nucleus. Its function is as follows. Involved in biosynthesis of the epicuticular wax. Plays a role in very-long-chain fatty acid (VLCFA) biosynthesis and is required for C28 fatty acid elongation in stem. Despite its classification as a BAHD acyltransferase based on sequence homology, CER2 does not seem to share the catalytic mechanism of the members of the BAHD family. This is Protein ECERIFERUM 2 (CER2) from Arabidopsis thaliana (Mouse-ear cress).